The sequence spans 1274 residues: Myosin-binding protein C, cardiac-type (1274 aa).

M1 carries the N-acetylmethionine modification. Residues P8 to T95 form the Ig-like C2-type 1 domain. S47 carries the phosphoserine modification. The segment covering T95–E104 has biased composition (basic and acidic residues). The interval T95–A153 is disordered. Position 117 is a phosphothreonine (T117). Positions L128–G149 are enriched in polar residues. The 103-residue stretch at P157–T259 folds into the Ig-like C2-type 2 domain. Positions 212, 214, 227, and 229 each coordinate Zn(2+). At S279 the chain carries Phosphoserine. Phosphothreonine; by PKA and PKC is present on T287. S288 is modified (phosphoserine). S307 carries the post-translational modification Phosphoserine; by PKA. Residues S312 and S427 each carry the phosphoserine modification. 2 consecutive Ig-like C2-type domains span residues K361 to P452 and P452 to E546. C436 and C443 are oxidised to a cystine. Phosphoserine occurs at positions 459 and 550. A Phosphothreonine modification is found at T607. One can recognise an Ig-like C2-type 5 domain in the interval P645 to T765. Fibronectin type-III domains lie at A774–P870 and E872–I967. Residues P971 to V1059 enclose the Ig-like C2-type 6 domain. The Fibronectin type-III 3 domain maps to P1068–P1163. The Ig-like C2-type 7 domain maps to P1181–E1269. Residue R1241 is modified to Omega-N-methylarginine.

The protein belongs to the immunoglobulin superfamily. MyBP family. In terms of processing, substrate for phosphorylation by PKA and PKC. Reversible phosphorylation appears to modulate contraction. Polyubiquitinated.

Its function is as follows. Thick filament-associated protein located in the crossbridge region of vertebrate striated muscle a bands. In vitro it binds MHC, F-actin and native thin filaments, and modifies the activity of actin-activated myosin ATPase. It may modulate muscle contraction or may play a more structural role. The polypeptide is Myosin-binding protein C, cardiac-type (Mybpc3) (Rattus norvegicus (Rat)).